The primary structure comprises 122 residues: uncharacterized protein (122 aa).

This is an uncharacterized protein from Acidianus sp. F28 (AFV-2).